Here is an 878-residue protein sequence, read N- to C-terminus: Pyruvate, phosphate dikinase (878 aa).

Residues 1–347 are N-terminal; that stretch reads MKKLIYYFGS…LYILQTRTAK (347 aa). Arginine 96 contributes to the ATP binding site. The interval 348–404 is linker 1; it reads RTAIAAINIAVQMVEEKLISKEQALMRIDPESLNQLLHTRIDYSKGLTSIAEGLPAS. Residues 405–502 are central; sequence PGAATGIAVF…VIKQGDIITI (98 aa). Threonine 457 is subject to Phosphothreonine; by PDRP1. Histidine 459 (tele-phosphohistidine intermediate) is an active-site residue. Residues 503 to 537 form a linker 2 region; that stretch reads DGGSGKIFLGEMPLIQPTFSEESKLILDWADEISS. Residues 538 to 878 form a C-terminal region; sequence LKVRANAETV…AAAQAKIKHG (341 aa). Residues arginine 565, arginine 621, glutamate 749, glycine 770, threonine 771, asparagine 772, and aspartate 773 each coordinate substrate. A Mg(2+)-binding site is contributed by glutamate 749. Aspartate 773 is a Mg(2+) binding site. Cysteine 835 serves as the catalytic Proton donor.

It belongs to the PEP-utilizing enzyme family. As to quaternary structure, homodimer. It depends on Mg(2+) as a cofactor. Phosphorylation of Thr-457 in the dark inactivates the enzyme. Dephosphorylation upon light stimulation reactivates the enzyme.

It carries out the reaction pyruvate + phosphate + ATP = phosphoenolpyruvate + AMP + diphosphate + H(+). With respect to regulation, activated by light-induced dephosphorylation. Inhibited by dark-induced phosphorylation. Both reactions are catalyzed by PDRP1. Its function is as follows. Catalyzes the reversible phosphorylation of pyruvate and phosphate. This chain is Pyruvate, phosphate dikinase (ppdK), found in Rickettsia conorii (strain ATCC VR-613 / Malish 7).